Reading from the N-terminus, the 134-residue chain is Translation initiation factor 2 subunit beta (134 aa).

Over residues 1-12 (MEYDDMLDRAME) the composition is skewed to basic and acidic residues. The interval 1-28 (MEYDDMLDRAMEETPEIDGTSERFEVPD) is disordered.

Belongs to the eIF-2-beta/eIF-5 family. In terms of assembly, heterotrimer composed of an alpha, a beta and a gamma chain.

Functionally, eIF-2 functions in the early steps of protein synthesis by forming a ternary complex with GTP and initiator tRNA. The polypeptide is Translation initiation factor 2 subunit beta (Haloarcula marismortui (strain ATCC 43049 / DSM 3752 / JCM 8966 / VKM B-1809) (Halobacterium marismortui)).